A 706-amino-acid chain; its full sequence is Glutamine-dependent NAD(+) synthetase (706 aa).

A CN hydrolase domain is found at 5–275 (VTVATCALNQ…VEVLTATLDL (271 aa)). Residue E45 is the Proton acceptor; for glutaminase activity of the active site. K114 functions as the For glutaminase activity in the catalytic mechanism. The active-site Nucleophile; for glutaminase activity is C175. Positions 325-706 (YHSPAEEISL…RQRQELDGVD (382 aa)) are ligase. 355 to 362 (PLSGGVDS) is an ATP binding site. Residue S357 is part of the active site.

It in the C-terminal section; belongs to the NAD synthetase family. As to quaternary structure, homohexamer.

It carries out the reaction deamido-NAD(+) + L-glutamine + ATP + H2O = L-glutamate + AMP + diphosphate + NAD(+) + H(+). The protein operates within cofactor biosynthesis; NAD(+) biosynthesis; NAD(+) from deamido-NAD(+) (L-Gln route): step 1/1. Catalyzes the ATP-dependent amidation of deamido-NAD to form NAD. Uses L-glutamine as a nitrogen source. The chain is Glutamine-dependent NAD(+) synthetase (NADSYN1) from Bos taurus (Bovine).